Consider the following 567-residue polypeptide: PHD finger protein 1 (567 aa).

Positions 1–31 are disordered; it reads MAQPPRLSRSGASSLWDPASPAPTSGPRPRL. Residues 29 to 86 form the Tudor domain; it reads PRLWEGQDVLARWTDGLLYLGTIKKVDSAREVCLVQFEDDSQFLVLWKDISPAALPGE. PHD-type zinc fingers lie at residues 87-142 and 186-240; these read ELLC…CVFA and QSYC…CRGG. 2 disordered regions span residues 333 to 441 and 455 to 537; these read ARMP…TDAR and HPSA…GYLS. The residue at position 360 (glycine 360) is a Phosphoserine. Positions 371–386 are enriched in basic and acidic residues; it reads PEPEPLRRRQKGKVEE. Residue serine 420 is modified to Phosphoserine. 3 stretches are compositionally biased toward low complexity: residues 423–433, 456–470, and 488–510; these read PNQSYQGSSGY, PSAS…SGPP, and SAPH…LPRR. Residues 524-534 show a composition bias toward gly residues; it reads GTGGGVRGGVG.

Belongs to the Polycomblike family. As to quaternary structure, interacts with CHMP1. Associated component of the PRC2 complex. Interacts with p53/TP53. As to expression, highest levels in heart, skeletal muscle, and pancreas, lower levels in brain, placenta, lung, liver and kidney.

The protein localises to the nucleus. Its subcellular location is the cytoplasm. The protein resides in the cytoskeleton. It localises to the microtubule organizing center. It is found in the centrosome. Polycomb group (PcG) that specifically binds histone H3 trimethylated at 'Lys-36' (H3K36me3) and recruits the PRC2 complex. Involved in DNA damage response and is recruited at double-strand breaks (DSBs). Acts by binding to H3K36me3, a mark for transcriptional activation, and recruiting the PRC2 complex: it is however unclear whether recruitment of the PRC2 complex to H3K36me3 leads to enhance or inhibit H3K27me3 methylation mediated by the PRC2 complex. According to some reports, PRC2 recruitment by PHF1 promotes H3K27me3 and subsequent gene silencing by inducing spreading of PRC2 and H3K27me3 into H3K36me3 loci. According to another report, PHF1 recruits the PRC2 complex at double-strand breaks (DSBs) and inhibits the activity of PRC2. Regulates p53/TP53 stability and prolonges its turnover: may act by specifically binding to a methylated from of p53/TP53. The protein is PHD finger protein 1 (PHF1) of Homo sapiens (Human).